The chain runs to 1100 residues: DNA-directed RNA polymerase subunit beta (1100 aa).

Positions Y1064 to D1100 are disordered. A compositionally biased stretch (polar residues) spans R1079–S1089.

Belongs to the RNA polymerase beta chain family. In cyanobacteria the RNAP catalytic core is composed of 2 alpha, 1 beta, 1 beta', 1 gamma and 1 omega subunit. When a sigma factor is associated with the core the holoenzyme is formed, which can initiate transcription.

The enzyme catalyses RNA(n) + a ribonucleoside 5'-triphosphate = RNA(n+1) + diphosphate. Functionally, DNA-dependent RNA polymerase catalyzes the transcription of DNA into RNA using the four ribonucleoside triphosphates as substrates. The chain is DNA-directed RNA polymerase subunit beta from Synechococcus sp. (strain ATCC 27144 / PCC 6301 / SAUG 1402/1) (Anacystis nidulans).